Here is a 440-residue protein sequence, read N- to C-terminus: Chromosome partition protein MukF (440 aa).

The tract at residues 208–236 is leucine-zipper; sequence LDETSGNLRELQDTLNAAGDKLQSQLLRI.

The protein belongs to the MukF family. In terms of assembly, interacts, and probably forms a ternary complex, with MukE and MukB via its C-terminal region. The complex formation is stimulated by calcium or magnesium. It is required for an interaction between MukE and MukB.

It is found in the cytoplasm. The protein localises to the nucleoid. Its function is as follows. Involved in chromosome condensation, segregation and cell cycle progression. May participate in facilitating chromosome segregation by condensation DNA from both sides of a centrally located replisome during cell division. Not required for mini-F plasmid partitioning. Probably acts via its interaction with MukB and MukE. Overexpression results in anucleate cells. It has a calcium binding activity. The chain is Chromosome partition protein MukF from Histophilus somni (strain 129Pt) (Haemophilus somnus).